Consider the following 251-residue polypeptide: Regulator of G-protein signaling 7-binding protein B (251 aa).

The tract at residues 1-43 is disordered; it reads MCSAPNGRKNRPRSAANIFQIGKSSVRDPERRESTESARRAQR. The segment covering 25 to 43 has biased composition (basic and acidic residues); it reads SVRDPERRESTESARRAQR. Residues Cys-246 and Cys-247 are each lipidated (S-palmitoyl cysteine).

It belongs to the RGS7BP/RGS9BP family. Palmitoylated. Undergoes rapid palmitoylation turnover. Palmitoylation regulates the cell membrane and nuclear shuttling and the regulation of GPCR signaling. Upon depalmitoylation, it is targeted from the plasma membrane into the nucleus. GPCR signaling inhibits depalmitoylation and promotes localization to the plasma membrane.

The protein localises to the nucleus. The protein resides in the cytoplasm. It is found in the cell membrane. In terms of biological role, regulator of G protein-coupled receptor (GPCR) signaling. Regulatory subunit of the R7-Gbeta5 complexes that acts by controlling the subcellular location of the R7-Gbeta5 complexes. When palmitoylated, it targets the R7-Gbeta5 complexes to the plasma membrane, leading to inhibit G protein alpha subunits. When it is unpalmitoylated, the R7-Gbeta5 complexes undergo a nuclear/cytoplasmic shuttling. In Danio rerio (Zebrafish), this protein is Regulator of G-protein signaling 7-binding protein B (rgs7bpb).